A 301-amino-acid polypeptide reads, in one-letter code: Probable alpha-L-glutamate ligase 2 (301 aa).

Residues methionine 104–valine 287 enclose the ATP-grasp domain. Residues lysine 141, glutamate 178–tyrosine 179, aspartate 187, and arginine 211–asparagine 213 each bind ATP. Residues aspartate 248, glutamate 260, and asparagine 262 each contribute to the Mg(2+) site. The Mn(2+) site is built by aspartate 248, glutamate 260, and asparagine 262.

It belongs to the RimK family. Mg(2+) serves as cofactor. Mn(2+) is required as a cofactor.

This chain is Probable alpha-L-glutamate ligase 2, found in Pseudoalteromonas atlantica (strain T6c / ATCC BAA-1087).